The sequence spans 141 residues: Large ribosomal subunit protein uL11 (141 aa).

It belongs to the universal ribosomal protein uL11 family. Part of the ribosomal stalk of the 50S ribosomal subunit. Interacts with L10 and the large rRNA to form the base of the stalk. L10 forms an elongated spine to which L12 dimers bind in a sequential fashion forming a multimeric L10(L12)X complex. One or more lysine residues are methylated.

Its function is as follows. Forms part of the ribosomal stalk which helps the ribosome interact with GTP-bound translation factors. The sequence is that of Large ribosomal subunit protein uL11 from Synechococcus sp. (strain CC9311).